Here is a 185-residue protein sequence, read N- to C-terminus: Ribosome-recycling factor (185 aa).

This sequence belongs to the RRF family.

Its subcellular location is the cytoplasm. Its function is as follows. Responsible for the release of ribosomes from messenger RNA at the termination of protein biosynthesis. May increase the efficiency of translation by recycling ribosomes from one round of translation to another. The chain is Ribosome-recycling factor from Rhodococcus erythropolis (strain PR4 / NBRC 100887).